A 633-amino-acid polypeptide reads, in one-letter code: DNA topoisomerase 4 subunit B (633 aa).

ATP-binding positions include Tyr-5, Asn-45, Asp-72, 113–119 (GLHGVGA), and Lys-337. Residues 419–534 (KELFIVEGDS…LGHVYLALPP (116 aa)) enclose the Toprim domain. Mg(2+)-binding residues include Glu-425, Asp-499, and Asp-501.

This sequence belongs to the type II topoisomerase family. ParE type 2 subfamily. In terms of assembly, heterotetramer composed of ParC and ParE. It depends on Mg(2+) as a cofactor. Requires Mn(2+) as cofactor. Ca(2+) is required as a cofactor.

The enzyme catalyses ATP-dependent breakage, passage and rejoining of double-stranded DNA.. In terms of biological role, topoisomerase IV is essential for chromosome segregation. It relaxes supercoiled DNA. Performs the decatenation events required during the replication of a circular DNA molecule. This Mycoplasma genitalium (strain ATCC 33530 / DSM 19775 / NCTC 10195 / G37) (Mycoplasmoides genitalium) protein is DNA topoisomerase 4 subunit B.